A 150-amino-acid polypeptide reads, in one-letter code: SsrA-binding protein (150 aa).

The protein belongs to the SmpB family.

Its subcellular location is the cytoplasm. Functionally, required for rescue of stalled ribosomes mediated by trans-translation. Binds to transfer-messenger RNA (tmRNA), required for stable association of tmRNA with ribosomes. tmRNA and SmpB together mimic tRNA shape, replacing the anticodon stem-loop with SmpB. tmRNA is encoded by the ssrA gene; the 2 termini fold to resemble tRNA(Ala) and it encodes a 'tag peptide', a short internal open reading frame. During trans-translation Ala-aminoacylated tmRNA acts like a tRNA, entering the A-site of stalled ribosomes, displacing the stalled mRNA. The ribosome then switches to translate the ORF on the tmRNA; the nascent peptide is terminated with the 'tag peptide' encoded by the tmRNA and targeted for degradation. The ribosome is freed to recommence translation, which seems to be the essential function of trans-translation. This chain is SsrA-binding protein, found in Campylobacter jejuni subsp. doylei (strain ATCC BAA-1458 / RM4099 / 269.97).